The sequence spans 219 residues: ER lumen protein-retaining receptor (219 aa).

At 1–3 the chain is on the lumenal side; it reads MLN. A helical membrane pass occupies residues 4–22; that stretch reads VFRIAGDFSHLASIIILIQ. The Cytoplasmic segment spans residues 23-36; that stretch reads SITTSNSVDGISLK. A helical transmembrane segment spans residues 37-54; sequence TQLLYTLVFITRYLNLFT. The Lumenal portion of the chain corresponds to 55–62; sequence KWTSLYNF. The chain crosses the membrane as a helical span at residues 63–82; that stretch reads LMKIVFISSSVYVIVLMRQQ. Residues 83–102 are Cytoplasmic-facing; that stretch reads KFKNPVAYQDMITRDQFKIK. Residues 103–116 traverse the membrane as a helical segment; sequence FLIVPCILLGLIFN. At 117-123 the chain is on the lumenal side; that stretch reads YRFSFIQ. The chain crosses the membrane as a helical span at residues 124-143; that stretch reads ICWSFSLWLESVAILPQLFM. The Cytoplasmic portion of the chain corresponds to 144–155; sequence LTKTGKAKQLTS. The helical transmembrane segment at 156-174 threads the bilayer; sequence HYIFALGLYRALYIPNWIW. Topologically, residues 175-184 are lumenal; it reads RYYTEERFDK. Residues 185-205 form a helical membrane-spanning segment; it reads LSVFTGVIQTLVYSDFFYIYY. Over 206–219 the chain is Cytoplasmic; that stretch reads QKVIKLGGDLELPQ.

It belongs to the ERD2 family.

It is found in the endoplasmic reticulum membrane. Functionally, required for the retention of luminal endoplasmic reticulum proteins. Determines the specificity of the luminal ER protein retention system. Also required for normal vesicular traffic through the Golgi. This receptor recognizes H-D-E-L and D-D-E-L, but not K-D-E-L. The protein is ER lumen protein-retaining receptor (ERD2) of Kluyveromyces lactis (strain ATCC 8585 / CBS 2359 / DSM 70799 / NBRC 1267 / NRRL Y-1140 / WM37) (Yeast).